Reading from the N-terminus, the 116-residue chain is Host transcription reprogramming factor 4 (116 aa).

A signal peptide spans 1 to 24; that stretch reads MHIIHISKFMALLAISTIAIPTRG. Residues 24 to 53 are disordered; it reads GRSEVDSRDVNQAQTVTSGSSIAPSGSEKR. Residues 33 to 47 show a composition bias toward polar residues; sequence VNQAQTVTSGSSIAP. A C2H2-type; degenerate zinc finger spans residues 74–96; it reads FQCPHCKDGISNRVALYTHVKAF.

It localises to the secreted. The protein resides in the host nucleus. In terms of biological role, probable secreted effector that translocates into the nuclei of host cells to reprogram the expression of targeted genes by binding on effector binding elements in rice. This Pyricularia oryzae (strain 70-15 / ATCC MYA-4617 / FGSC 8958) (Rice blast fungus) protein is Host transcription reprogramming factor 4.